Reading from the N-terminus, the 289-residue chain is Probable aquaporin PIP2-6 (289 aa).

Met1 bears the N-acetylmethionine mark. Residues 1 to 38 are Cytoplasmic-facing; sequence MTKDELTEEESLSGKDYLDPPPVKTFEVRELKKWSFYR. A Phosphothreonine modification is found at Thr7. A Phosphoserine modification is found at Ser11. A helical membrane pass occupies residues 39–59; sequence AVIAEFIATLLFLYVTVLTVI. At 60–80 the chain is on the extracellular side; the sequence is GFKSQTDINAGGGACASVGLL. The helical transmembrane segment at 81–101 threads the bilayer; it reads GISWAFGGMIFILVYCTAGIS. Residues 102-124 lie on the Cytoplasmic side of the membrane; the sequence is GGHINPAVTFGLFLASKVSLVRA. The short motif at 106 to 108 is the NPA 1 element; the sequence is NPA. A helical membrane pass occupies residues 125–145; the sequence is VSYMVAQCLGATCGVGLVKVF. Residues 146–165 are Extracellular-facing; it reads QSTYYNRYGGGANMLSDGYN. Residues 166-186 traverse the membrane as a helical segment; it reads VGVGVGAEIIGTFVLVYTVFS. Residues 187–200 lie on the Cytoplasmic side of the membrane; it reads ATDPKRNARDSHIP. The helical transmembrane segment at 201–221 threads the bilayer; sequence VLAPLPIGFSVFMVHLATIPI. Over 222–248 the chain is Extracellular; the sequence is TGTGINPARSFGAAVIYNNQKAWDDQW. The NPA 2 motif lies at 227 to 229; sequence NPA. The helical transmembrane segment at 249-269 threads the bilayer; that stretch reads IFWVGPFVGAAIAAFYHQFVL. The Cytoplasmic portion of the chain corresponds to 270–289; it reads RAGAMKAYGSVRSQLHELHA. A phosphoserine mark is found at Ser279 and Ser282.

The protein belongs to the MIP/aquaporin (TC 1.A.8) family. PIP (TC 1.A.8.11) subfamily. In terms of tissue distribution, expressed above ground, and in flower buds.

Its subcellular location is the cell membrane. Functionally, aquaporins facilitate the transport of water and small neutral solutes across cell membranes. The sequence is that of Probable aquaporin PIP2-6 (PIP2-6) from Arabidopsis thaliana (Mouse-ear cress).